The primary structure comprises 367 residues: Di-N-acetylchitobiase (367 aa).

A signal peptide spans 1-23 (MALSDLLELTLLLLLPLLERLSA). Positions 24–367 (EDCPCSEASL…EMWGALRPRL (344 aa)) constitute a GH18 domain. Glutamate 128 acts as the Proton donor in catalysis. Residues asparagine 178, asparagine 213, asparagine 247, and asparagine 284 are each glycosylated (N-linked (GlcNAc...) asparagine).

This sequence belongs to the glycosyl hydrolase 18 family.

The protein resides in the lysosome. Involved in the degradation of asparagine-linked glycoproteins. Hydrolyze of N-acetyl-beta-D-glucosamine (1-4)N-acetylglucosamine chitobiose core from the reducing end of the bond, it requires prior cleavage by glycosylasparaginase. The chain is Di-N-acetylchitobiase (Ctbs) from Rattus norvegicus (Rat).